Consider the following 489-residue polypeptide: Ribulose bisphosphate carboxylase large chain (489 aa).

Positions 128 and 178 each coordinate substrate. Lys-180 serves as the catalytic Proton acceptor. Lys-182 is a binding site for substrate. Residues Lys-206, Asp-208, and Glu-209 each coordinate Mg(2+). Lys-206 carries the post-translational modification N6-carboxylysine. Catalysis depends on His-298, which acts as the Proton acceptor. Residues Arg-299, His-331, and Ser-383 each contribute to the substrate site.

This sequence belongs to the RuBisCO large chain family. Type I subfamily. As to quaternary structure, heterohexadecamer of 8 large chains and 8 small chains. Requires Mg(2+) as cofactor.

It carries out the reaction 2 (2R)-3-phosphoglycerate + 2 H(+) = D-ribulose 1,5-bisphosphate + CO2 + H2O. The catalysed reaction is D-ribulose 1,5-bisphosphate + O2 = 2-phosphoglycolate + (2R)-3-phosphoglycerate + 2 H(+). In terms of biological role, ruBisCO catalyzes two reactions: the carboxylation of D-ribulose 1,5-bisphosphate, the primary event in carbon dioxide fixation, as well as the oxidative fragmentation of the pentose substrate. Both reactions occur simultaneously and in competition at the same active site. This chain is Ribulose bisphosphate carboxylase large chain, found in Nitrosospira sp. (strain 40KI).